The following is a 100-amino-acid chain: Testis development-related protein 1 (100 aa).

Residues 73-100 (GLGSLGGQDSSGSLVQRASCELESPYEL) are disordered.

As to expression, expressed in the testis but not in any other non-reproductive tissues (at protein level). Mainly located in spermatogenic cells in seminiferous tubules of adult testis.

The protein localises to the cytoplasm. The chain is Testis development-related protein 1 (TDRG1) from Homo sapiens (Human).